A 438-amino-acid chain; its full sequence is GDP-mannose 6-dehydrogenase (438 aa).

Positions 10, 11, 30, 35, 86, and 124 each coordinate NAD(+). Positions 161, 210, 214, 217, 225, 256, 257, 259, 262, and 265 each coordinate GDP-alpha-D-mannuronate. C268 is an active-site residue. Residue K271 participates in NAD(+) binding. Residue K324 coordinates GDP-alpha-D-mannuronate. R331 contacts NAD(+).

This sequence belongs to the UDP-glucose/GDP-mannose dehydrogenase family.

It catalyses the reaction GDP-alpha-D-mannose + 2 NAD(+) + H2O = GDP-alpha-D-mannuronate + 2 NADH + 3 H(+). The protein operates within glycan biosynthesis; alginate biosynthesis. Its function is as follows. Catalyzes the oxidation of guanosine diphospho-D-mannose (GDP-D-mannose) to GDP-D-mannuronic acid, a precursor for alginate polymerization. The alginate layer causes a mucoid phenotype and provides a protective barrier against host immune defenses and antibiotics. The chain is GDP-mannose 6-dehydrogenase (algD) from Pseudomonas putida (strain ATCC 47054 / DSM 6125 / CFBP 8728 / NCIMB 11950 / KT2440).